We begin with the raw amino-acid sequence, 510 residues long: ATP synthase subunit alpha (510 aa).

Residue 169–176 (GDRQTGKT) coordinates ATP.

This sequence belongs to the ATPase alpha/beta chains family. F-type ATPases have 2 components, CF(1) - the catalytic core - and CF(0) - the membrane proton channel. CF(1) has five subunits: alpha(3), beta(3), gamma(1), delta(1), epsilon(1). CF(0) has three main subunits: a(1), b(2) and c(9-12). The alpha and beta chains form an alternating ring which encloses part of the gamma chain. CF(1) is attached to CF(0) by a central stalk formed by the gamma and epsilon chains, while a peripheral stalk is formed by the delta and b chains.

Its subcellular location is the cell inner membrane. It carries out the reaction ATP + H2O + 4 H(+)(in) = ADP + phosphate + 5 H(+)(out). Functionally, produces ATP from ADP in the presence of a proton gradient across the membrane. The alpha chain is a regulatory subunit. This is ATP synthase subunit alpha from Nitrobacter winogradskyi (strain ATCC 25391 / DSM 10237 / CIP 104748 / NCIMB 11846 / Nb-255).